Reading from the N-terminus, the 156-residue chain is Succinate dehydrogenase assembly factor 2-B, mitochondrial (156 aa).

Residues 1-24 (MLRQLIVSTVGRRMPLQMISQSRL) constitute a mitochondrion transit peptide.

It belongs to the SDHAF2 family. In terms of assembly, interacts with the flavoprotein subunit within the SDH catalytic dimer.

Its subcellular location is the mitochondrion matrix. In terms of biological role, plays an essential role in the assembly of succinate dehydrogenase (SDH), an enzyme complex (also referred to as respiratory complex II) that is a component of both the tricarboxylic acid (TCA) cycle and the mitochondrial electron transport chain, and which couples the oxidation of succinate to fumarate with the reduction of ubiquinone (coenzyme Q) to ubiquinol. Required for flavinylation (covalent attachment of FAD) of the flavoprotein subunit of the SDH catalytic dimer. In Drosophila erecta (Fruit fly), this protein is Succinate dehydrogenase assembly factor 2-B, mitochondrial.